A 1070-amino-acid chain; its full sequence is DNA-directed RNA polymerase subunit beta (1070 aa).

Belongs to the RNA polymerase beta chain family. As to quaternary structure, in plastids the minimal PEP RNA polymerase catalytic core is composed of four subunits: alpha, beta, beta', and beta''. When a (nuclear-encoded) sigma factor is associated with the core the holoenzyme is formed, which can initiate transcription.

Its subcellular location is the plastid. The protein localises to the chloroplast. It catalyses the reaction RNA(n) + a ribonucleoside 5'-triphosphate = RNA(n+1) + diphosphate. Its function is as follows. DNA-dependent RNA polymerase catalyzes the transcription of DNA into RNA using the four ribonucleoside triphosphates as substrates. This chain is DNA-directed RNA polymerase subunit beta, found in Solanum bulbocastanum (Wild potato).